The chain runs to 308 residues: Ribonuclease HIII (308 aa).

In terms of domain architecture, RNase H type-2 spans 91 to 308; it reads KNVIGSDEVG…TEKALKMVKK (218 aa). A divalent metal cation contacts are provided by Asp97, Glu98, and Asp202.

It belongs to the RNase HII family. RnhC subfamily. Mn(2+) serves as cofactor. Mg(2+) is required as a cofactor.

It is found in the cytoplasm. The catalysed reaction is Endonucleolytic cleavage to 5'-phosphomonoester.. Functionally, endonuclease that specifically degrades the RNA of RNA-DNA hybrids. This chain is Ribonuclease HIII, found in Listeria monocytogenes serovar 1/2a (strain ATCC BAA-679 / EGD-e).